The sequence spans 399 residues: Carbamoyl phosphate synthase small chain (399 aa).

Residues 1 to 204 (MTKTTLSSDP…WNKGYTINNE (204 aa)) form a CPSase region. L-glutamine contacts are provided by S60, G256, and G258. In terms of domain architecture, Glutamine amidotransferase type-1 spans 208–396 (HIVAIDYGIK…HDLIVNYREQ (189 aa)). C285 acts as the Nucleophile in catalysis. L-glutamine contacts are provided by L286, Q289, N327, G329, and F330. Catalysis depends on residues H369 and E371.

Belongs to the CarA family. Composed of two chains; the small (or glutamine) chain promotes the hydrolysis of glutamine to ammonia, which is used by the large (or ammonia) chain to synthesize carbamoyl phosphate. Tetramer of heterodimers (alpha,beta)4.

The enzyme catalyses hydrogencarbonate + L-glutamine + 2 ATP + H2O = carbamoyl phosphate + L-glutamate + 2 ADP + phosphate + 2 H(+). The catalysed reaction is L-glutamine + H2O = L-glutamate + NH4(+). It participates in amino-acid biosynthesis; L-arginine biosynthesis; carbamoyl phosphate from bicarbonate: step 1/1. It functions in the pathway pyrimidine metabolism; UMP biosynthesis via de novo pathway; (S)-dihydroorotate from bicarbonate: step 1/3. Functionally, small subunit of the glutamine-dependent carbamoyl phosphate synthetase (CPSase). CPSase catalyzes the formation of carbamoyl phosphate from the ammonia moiety of glutamine, carbonate, and phosphate donated by ATP, constituting the first step of 2 biosynthetic pathways, one leading to arginine and/or urea and the other to pyrimidine nucleotides. The small subunit (glutamine amidotransferase) binds and cleaves glutamine to supply the large subunit with the substrate ammonia. The chain is Carbamoyl phosphate synthase small chain from Bartonella bacilliformis (strain ATCC 35685 / KC583 / Herrer 020/F12,63).